Here is a 1521-residue protein sequence, read N- to C-terminus: Protein OPAQUE1 (1521 aa).

The region spanning 4–53 (RKGLKVWVEEKGEGWVEAEVVEAKERAVVVFSSQRKKITVSPEKLLPRDT) is the Myosin N-terminal SH3-like domain. Residues 60-731 (GHVDDMTKLT…QIAILDMRRA (672 aa)) form the Myosin motor domain. Residues 155–162 (GESGAGKT) and 208–216 (NDNSSRFGK) contribute to the ATP site. 4 actin-binding regions span residues 493–527 (LIEK…FRNF), 529–552 (SHLR…AGKV), 587–612 (FTSL…KLQL), and 612–634 (LQAL…KPNS). 6 consecutive IQ domains span residues 733–755 (ILDN…KEFV), 756–778 (KTRE…KMFA), 781–803 (RETA…RAHL), 804–826 (QACL…RYFS), 829–851 (REHK…ILFQ), and 852–874 (NYRQ…KELR). Coiled coils occupy residues 870-910 (RKEL…ERRL) and 974-1050 (SAEA…LRQK). Positions 1162-1459 (DHVIEAINDV…VAAMREMVNK (298 aa)) constitute a Dilute domain.

This sequence belongs to the TRAFAC class myosin-kinesin ATPase superfamily. Myosin family. Plant myosin class XI subfamily. As to quaternary structure, interacts (via C-terminus) with HIP (via C-terminus), but not with zeins, FL1 or intrinsic proteins of protein bodies. As to expression, high expression in kernels and stems, intermediate in ears and leaves, and low in roots, silks and tassels.

The protein localises to the cytoplasm. Its function is as follows. Myosin XI motor protein required for endoplasmic reticulum motility and protein body formation. May function by binding with its tail domain to receptor proteins on membranes and exerting force with its N-terminal motor domain against actin filaments, thereby transporting its cargo along polarized actin cables. The protein is Protein OPAQUE1 of Zea mays (Maize).